The sequence spans 614 residues: MKRDRLGRFLSPGSSRQCGASDGGGGVSRTRGRPSLSGGPRVDGATARRAWGPVGSCGDAGEDGADEAGAGRALAMGHCRLCHGKFSSRSLRSISERAPGASMERPSAEERVLVRDFQRLLGVAVRQDPTLSPFVCKSCHAQFYQCHSLLKSFLQRVNASPAGRRKPCAKVGAQPPTGAEEGACLVDLITSSPQCLHGLVGWVHGHAASCGALPHLQRTLSSEYCGVIQVVWGCDQGHDYTMDTSSSCKAFLLDSALAVKWPWDKETAPRLPQHRGWNPGDAPQTSQGRGTGTPVGAETKTLPSTDVAQPPSDSDAVGPRSGFPPQPSLPLCRAPGQLGEKQLPSSTSDDRVKDEFSDLSEGDVLSEDENDKKQNAQSSDESFEPYPERKVSGKKSESKEAKKSEEPRIRKKPGPKPGWKKKLRCEREELPTIYKCPYQGCTAVYRGADGMKKHIKEHHEEVRERPCPHPGCNKVFMIDRYLQRHVKLIHTEVRNYICDECGQTFKQRKHLLVHQMRHSGAKPLQCEVCGFQCRQRASLKYHMTKHKAETELDFACDQCGRRFEKAHNLNVHMSMVHPLTQTQDKALPLEAEPPPGPPSPSVTTEGQAVKPEPT.

The disordered stretch occupies residues 1–50 (MKRDRLGRFLSPGSSRQCGASDGGGGVSRTRGRPSLSGGPRVDGATARRA). In terms of domain architecture, ZAD spans 77 to 163 (GHCRLCHGKF…LQRVNASPAG (87 aa)). Residues cysteine 79, cysteine 82, cysteine 136, and cysteine 139 each contribute to the Zn(2+) site. The disordered stretch occupies residues 268-420 (APRLPQHRGW…KKPGPKPGWK (153 aa)). Acidic residues predominate over residues 357 to 369 (SDLSEGDVLSEDE). A compositionally biased stretch (basic and acidic residues) spans 386 to 408 (YPERKVSGKKSESKEAKKSEEPR). Residues 409–420 (IRKKPGPKPGWK) show a composition bias toward basic residues. 5 consecutive C2H2-type zinc fingers follow at residues 434–458 (YKCP…IKEH), 465–490 (RPCP…KLIH), 496–518 (YICD…QMRH), 524–546 (LQCE…MTKH), and 554–577 (FACD…SMVH). Residues 583–614 (QDKALPLEAEPPPGPPSPSVTTEGQAVKPEPT) form a disordered region. Positions 591–600 (AEPPPGPPSP) are enriched in pro residues.

It is found in the nucleus. Its subcellular location is the chromosome. The protein resides in the centromere. The protein localises to the kinetochore. May be involved in transcriptional regulation. The protein is Zinc finger protein 276 (ZNF276) of Homo sapiens (Human).